A 487-amino-acid polypeptide reads, in one-letter code: ATP synthase subunit beta, plastid (487 aa).

Gly169 to Thr176 contributes to the ATP binding site.

It belongs to the ATPase alpha/beta chains family. F-type ATPases have 2 components, CF(1) - the catalytic core - and CF(0) - the membrane proton channel. CF(1) has five subunits: alpha(3), beta(3), gamma(1), delta(1), epsilon(1). CF(0) has four main subunits: a(1), b(1), b'(1) and c(9-12).

Its subcellular location is the plastid membrane. The enzyme catalyses ATP + H2O + 4 H(+)(in) = ADP + phosphate + 5 H(+)(out). Functionally, produces ATP from ADP in the presence of a proton gradient across the membrane. The catalytic sites are hosted primarily by the beta subunits. This Cuscuta pentagona (Five-angled dodder) protein is ATP synthase subunit beta, plastid (atpB).